We begin with the raw amino-acid sequence, 325 residues long: Aspartate carbamoyltransferase catalytic subunit (325 aa).

Positions 64 and 65 each coordinate carbamoyl phosphate. Residue K92 coordinates L-aspartate. 3 residues coordinate carbamoyl phosphate: R114, H142, and Q145. The L-aspartate site is built by R176 and R230. Carbamoyl phosphate-binding residues include G271 and P272.

Belongs to the aspartate/ornithine carbamoyltransferase superfamily. ATCase family. In terms of assembly, heterododecamer (2C3:3R2) of six catalytic PyrB chains organized as two trimers (C3), and six regulatory PyrI chains organized as three dimers (R2).

It catalyses the reaction carbamoyl phosphate + L-aspartate = N-carbamoyl-L-aspartate + phosphate + H(+). It functions in the pathway pyrimidine metabolism; UMP biosynthesis via de novo pathway; (S)-dihydroorotate from bicarbonate: step 2/3. Its function is as follows. Catalyzes the condensation of carbamoyl phosphate and aspartate to form carbamoyl aspartate and inorganic phosphate, the committed step in the de novo pyrimidine nucleotide biosynthesis pathway. The polypeptide is Aspartate carbamoyltransferase catalytic subunit (Nitratidesulfovibrio vulgaris (strain DSM 19637 / Miyazaki F) (Desulfovibrio vulgaris)).